Here is a 247-residue protein sequence, read N- to C-terminus: Auxin-responsive protein IAA13 (247 aa).

The EAR-like (transcriptional repression) motif lies at 14–18; that stretch reads LELGL. The span at 25 to 40 shows a compositional bias: gly residues; sequence GTAAKIGKSGGGGAWG. Disordered stretches follow at residues 25–44 and 49–119; these read GTAA…ERGR and KDFP…PKDV. Residues 62-75 show a composition bias toward low complexity; it reads SASHAGSSPPRSSS. Residues 87–98 show a composition bias toward polar residues; the sequence is RMNSLVNNQATK. Over residues 106–119 the composition is skewed to basic and acidic residues; that stretch reads AGKKKVKDDEPKDV. One can recognise a PB1 domain in the interval 129–225; it reads VGFIKVNMDG…SVKRLRVMKT (97 aa).

Belongs to the Aux/IAA family. In terms of assembly, homodimers and heterodimers. Interacts with TPL. In terms of tissue distribution, preferentially expressed in stems.

It localises to the nucleus. Its function is as follows. Aux/IAA proteins are short-lived transcriptional factors that function as repressors of early auxin response genes at low auxin concentrations. Repression is thought to result from the interaction with auxin response factors (ARFs), proteins that bind to the auxin-responsive promoter element (AuxRE). Formation of heterodimers with ARF proteins may alter their ability to modulate early auxin response genes expression. The protein is Auxin-responsive protein IAA13 (IAA13) of Arabidopsis thaliana (Mouse-ear cress).